Here is a 417-residue protein sequence, read N- to C-terminus: Serine hydroxymethyltransferase (417 aa).

Residues leucine 120 and 124–126 (GHL) contribute to the (6S)-5,6,7,8-tetrahydrofolate site. Lysine 229 carries the post-translational modification N6-(pyridoxal phosphate)lysine.

The protein belongs to the SHMT family. In terms of assembly, homodimer. Pyridoxal 5'-phosphate serves as cofactor.

Its subcellular location is the cytoplasm. It carries out the reaction (6R)-5,10-methylene-5,6,7,8-tetrahydrofolate + glycine + H2O = (6S)-5,6,7,8-tetrahydrofolate + L-serine. Its pathway is one-carbon metabolism; tetrahydrofolate interconversion. It functions in the pathway amino-acid biosynthesis; glycine biosynthesis; glycine from L-serine: step 1/1. In terms of biological role, catalyzes the reversible interconversion of serine and glycine with tetrahydrofolate (THF) serving as the one-carbon carrier. This reaction serves as the major source of one-carbon groups required for the biosynthesis of purines, thymidylate, methionine, and other important biomolecules. Also exhibits THF-independent aldolase activity toward beta-hydroxyamino acids, producing glycine and aldehydes, via a retro-aldol mechanism. The chain is Serine hydroxymethyltransferase from Anaeromyxobacter dehalogenans (strain 2CP-C).